The following is a 341-amino-acid chain: Tetraacyldisaccharide 4'-kinase (341 aa).

65–72 (TVGGSGKT) is an ATP binding site.

It belongs to the LpxK family.

It carries out the reaction a lipid A disaccharide + ATP = a lipid IVA + ADP + H(+). It participates in glycolipid biosynthesis; lipid IV(A) biosynthesis; lipid IV(A) from (3R)-3-hydroxytetradecanoyl-[acyl-carrier-protein] and UDP-N-acetyl-alpha-D-glucosamine: step 6/6. In terms of biological role, transfers the gamma-phosphate of ATP to the 4'-position of a tetraacyldisaccharide 1-phosphate intermediate (termed DS-1-P) to form tetraacyldisaccharide 1,4'-bis-phosphate (lipid IVA). The protein is Tetraacyldisaccharide 4'-kinase of Shewanella woodyi (strain ATCC 51908 / MS32).